A 249-amino-acid chain; its full sequence is Enolase-phosphatase E1 (249 aa).

This sequence belongs to the HAD-like hydrolase superfamily. MasA/MtnC family. As to quaternary structure, monomer. Requires Mg(2+) as cofactor.

It carries out the reaction 5-methylsulfanyl-2,3-dioxopentyl phosphate + H2O = 1,2-dihydroxy-5-(methylsulfanyl)pent-1-en-3-one + phosphate. The protein operates within amino-acid biosynthesis; L-methionine biosynthesis via salvage pathway; L-methionine from S-methyl-5-thio-alpha-D-ribose 1-phosphate: step 3/6. It participates in amino-acid biosynthesis; L-methionine biosynthesis via salvage pathway; L-methionine from S-methyl-5-thio-alpha-D-ribose 1-phosphate: step 4/6. Functionally, bifunctional enzyme that catalyzes the enolization of 2,3-diketo-5-methylthiopentyl-1-phosphate (DK-MTP-1-P) into the intermediate 2-hydroxy-3-keto-5-methylthiopentenyl-1-phosphate (HK-MTPenyl-1-P), which is then dephosphorylated to form the acireductone 1,2-dihydroxy-3-keto-5-methylthiopentene (DHK-MTPene). This is Enolase-phosphatase E1 from Pseudomonas aeruginosa (strain ATCC 15692 / DSM 22644 / CIP 104116 / JCM 14847 / LMG 12228 / 1C / PRS 101 / PAO1).